Here is a 586-residue protein sequence, read N- to C-terminus: 2-succinyl-5-enolpyruvyl-6-hydroxy-3-cyclohexene-1-carboxylate synthase (586 aa).

This sequence belongs to the TPP enzyme family. MenD subfamily. As to quaternary structure, homodimer. It depends on Mg(2+) as a cofactor. Mn(2+) serves as cofactor. Thiamine diphosphate is required as a cofactor.

The catalysed reaction is isochorismate + 2-oxoglutarate + H(+) = 5-enolpyruvoyl-6-hydroxy-2-succinyl-cyclohex-3-ene-1-carboxylate + CO2. Its pathway is quinol/quinone metabolism; 1,4-dihydroxy-2-naphthoate biosynthesis; 1,4-dihydroxy-2-naphthoate from chorismate: step 2/7. It participates in quinol/quinone metabolism; menaquinone biosynthesis. In terms of biological role, catalyzes the thiamine diphosphate-dependent decarboxylation of 2-oxoglutarate and the subsequent addition of the resulting succinic semialdehyde-thiamine pyrophosphate anion to isochorismate to yield 2-succinyl-5-enolpyruvyl-6-hydroxy-3-cyclohexene-1-carboxylate (SEPHCHC). The protein is 2-succinyl-5-enolpyruvyl-6-hydroxy-3-cyclohexene-1-carboxylate synthase of Natronomonas pharaonis (strain ATCC 35678 / DSM 2160 / CIP 103997 / JCM 8858 / NBRC 14720 / NCIMB 2260 / Gabara) (Halobacterium pharaonis).